The primary structure comprises 485 residues: Glutamate--tRNA ligase (485 aa).

Arg-6 lines the L-glutamate pocket. Positions 9 to 19 (PSPTGNLHIGT) match the 'HIGH' region motif. Residues Tyr-192 and 210 to 214 (RGEDH) contribute to the L-glutamate site. Positions 248-252 (KLSKR) match the 'KMSKS' region motif. Position 251 (Lys-251) interacts with ATP.

The protein belongs to the class-I aminoacyl-tRNA synthetase family. Glutamate--tRNA ligase type 1 subfamily. In terms of assembly, monomer. Does not require zinc. is required as a cofactor.

The protein localises to the cytoplasm. The enzyme catalyses tRNA(Glu) + L-glutamate + ATP = L-glutamyl-tRNA(Glu) + AMP + diphosphate. Its function is as follows. Non-discriminating glutamyl-tRNA synthetase. Catalyzes the attachment of glutamate to tRNA(Glu) in a two-step reaction: glutamate is first activated by ATP to form Glu-AMP and then transferred to the acceptor end of tRNA(Glu). Acylates both tRNA(Glu) and tRNA(Gln) with glutamate, but has 13-fold higher efficiency with tRNA(Glu). This is Glutamate--tRNA ligase (gltX) from Thermosynechococcus vestitus (strain NIES-2133 / IAM M-273 / BP-1).